A 296-amino-acid chain; its full sequence is Acetylglutamate kinase (296 aa).

Residues 66–67 (GG), R88, and N191 each bind substrate.

Belongs to the acetylglutamate kinase family. ArgB subfamily.

It localises to the cytoplasm. The enzyme catalyses N-acetyl-L-glutamate + ATP = N-acetyl-L-glutamyl 5-phosphate + ADP. The protein operates within amino-acid biosynthesis; L-arginine biosynthesis; N(2)-acetyl-L-ornithine from L-glutamate: step 2/4. Its function is as follows. Catalyzes the ATP-dependent phosphorylation of N-acetyl-L-glutamate. This chain is Acetylglutamate kinase, found in Lawsonia intracellularis (strain PHE/MN1-00).